The chain runs to 264 residues: uncharacterized protein (264 aa).

The next 6 helical transmembrane spans lie at 1–21, 43–63, 95–115, 146–166, 181–201, and 215–235; these read MLLGLGIVVLIYSLIALSVSL, FFGVLNLLIALGVAGIINGFV, VVGLIHAGILMVLTTVALSSL, IATWTSVGIFWFLGLVLLGGL, GWLAVVVIGLTTLVVMVQPFV, and IVANTILIAILVIIVLVMFFP.

It to M.pneumoniae MPN_308 C-terminal region.

The protein localises to the cell membrane. This is an uncharacterized protein from Mycoplasma pneumoniae (strain ATCC 29342 / M129 / Subtype 1) (Mycoplasmoides pneumoniae).